The chain runs to 136 residues: Flagellar assembly factor FliW 2 (136 aa).

This sequence belongs to the FliW family. Interacts with translational regulator CsrA and flagellin(s).

Its subcellular location is the cytoplasm. Acts as an anti-CsrA protein, binds CsrA and prevents it from repressing translation of its target genes, one of which is flagellin. Binds to flagellin and participates in the assembly of the flagellum. The sequence is that of Flagellar assembly factor FliW 2 from Wolinella succinogenes (strain ATCC 29543 / DSM 1740 / CCUG 13145 / JCM 31913 / LMG 7466 / NCTC 11488 / FDC 602W) (Vibrio succinogenes).